A 478-amino-acid chain; its full sequence is Ribosomal RNA small subunit methyltransferase F (478 aa).

Residues 121-127 (ASAPGSK), glutamate 145, aspartate 172, and aspartate 190 each bind S-adenosyl-L-methionine. Cysteine 243 acts as the Nucleophile in catalysis.

The protein belongs to the class I-like SAM-binding methyltransferase superfamily. RsmB/NOP family.

It localises to the cytoplasm. The enzyme catalyses cytidine(1407) in 16S rRNA + S-adenosyl-L-methionine = 5-methylcytidine(1407) in 16S rRNA + S-adenosyl-L-homocysteine + H(+). Specifically methylates the cytosine at position 1407 (m5C1407) of 16S rRNA. The sequence is that of Ribosomal RNA small subunit methyltransferase F from Shewanella woodyi (strain ATCC 51908 / MS32).